A 378-amino-acid polypeptide reads, in one-letter code: Signal peptide peptidase (378 aa).

A disordered region spans residues 1–27 (MDSAVSDPHNGSAEAGTPANGTTRPPS). Over 1 to 31 (MDSAVSDPHNGSAEAGTPANGTTRPPSTPEG) the chain is Lumenal. Residues Asn10 and Asn20 are each glycosylated (N-linked (GlcNAc...) asparagine). Residues 32 to 52 (IALAYGSLLLMALLPIFFGAL) traverse the membrane as a helical segment. The Cytoplasmic portion of the chain corresponds to 53–77 (RSVRCARGKSSSDMPETITSRDAAR). Residues 78-98 (FPIIASCTLLGLYLFFKIFSQ) form a helical membrane-spanning segment. Residues 99–100 (EY) lie on the Lumenal side of the membrane. A helical transmembrane segment spans residues 101–121 (INLLLSMYFFVLGILALSHTI). Residues 122 to 157 (SPFMNKFFPANFPNRQYQLLFTQGSGENKEEIINYE) lie on the Cytoplasmic side of the membrane. A helical transmembrane segment spans residues 158 to 178 (FDTKDLVCLGLSSVVGVWYLL). Topologically, residues 179–181 (RKH) are lumenal. The chain crosses the membrane as a helical span at residues 182-202 (WIANNLFGLAFSLNGVELLHL). The Cytoplasmic portion of the chain corresponds to 203-209 (NNVSTGC). A helical transmembrane segment spans residues 210–230 (ILLGGLFIYDIFWVFGTNVMV). Asp219 is an active-site residue. Topologically, residues 231-256 (TVAKSFEAPIKLVFPQDLLEKGLEAD) are lumenal. A helical transmembrane segment spans residues 257–277 (NFAMLGLGDIVIPGIFIALLL). The active site involves Asp265. The Cytoplasmic segment spans residues 278–290 (RFDISLKKNTHTY). A helical membrane pass occupies residues 291-311 (FYTSFAAYIFGLGLTIFIMHI). At 312 to 314 (FKH) the chain is on the lumenal side. A helical membrane pass occupies residues 315–335 (AQPALLYLVPACIGFPVLVAL). The PAL motif lies at 317 to 319 (PAL). The Cytoplasmic segment spans residues 336 to 378 (AKGEVAEMFSYEESNPKDPAAETESKEESTEASASKRLEKKEK). Positions 346 to 378 (YEESNPKDPAAETESKEESTEASASKRLEKKEK) are disordered. Residues 349–378 (SNPKDPAAETESKEESTEASASKRLEKKEK) are compositionally biased toward basic and acidic residues. At Ser368 the chain carries Phosphoserine.

It belongs to the peptidase A22B family. In terms of assembly, monomer. Homodimer. Interacts with RNF139. Interacts with DERL1 and XBP1 isoform 1. Widely expressed with highest levels in liver and kidney. In the brain, expressed predominantly in hippocampus, amygdala, piriform cortex, choroid plexus and arcuate nucleus of the hypothalamic area. Isoform 1 is more strongly expressed than isoform 4 in most tissues except brain and skeletal muscle where isoform 4 is the dominant isoform and in testis where isoform 1 and isoform 4 are expressed at similar levels. In the brain, isoform 4 is not detected in the choroid plexus.

It localises to the endoplasmic reticulum membrane. The protein localises to the membrane. The protein resides in the cell membrane. Catalyzes intramembrane proteolysis of signal peptides that have been removed from precursors of secretory and membrane proteins, resulting in the release of the fragment from the ER membrane into the cytoplasm. Required to generate lymphocyte cell surface (HLA-E) epitopes derived from MHC class I signal peptides. Involved in the intramembrane cleavage of the integral membrane protein PSEN1. Cleaves the integral membrane protein XBP1 isoform 1 in a DERL1/RNF139-dependent manner. May play a role in graft rejection. This chain is Signal peptide peptidase, found in Mus musculus (Mouse).